A 104-amino-acid chain; its full sequence is Small ribosomal subunit protein uS10 (104 aa).

The protein belongs to the universal ribosomal protein uS10 family. As to quaternary structure, part of the 30S ribosomal subunit.

Functionally, involved in the binding of tRNA to the ribosomes. This is Small ribosomal subunit protein uS10 from Alkaliphilus oremlandii (strain OhILAs) (Clostridium oremlandii (strain OhILAs)).